We begin with the raw amino-acid sequence, 476 residues long: NAD(+) hydrolase ThsA (476 aa).

Positions 4-283 (NPIVELFIKD…QRIENNIKTK (280 aa)) constitute a Deacetylase sirtuin-type domain. NAD(+) is bound by residues alanine 23, aspartate 114, and histidine 152. Histidine 152 (proton acceptor) is an active-site residue. The segment at 284 to 476 (TVFLSGSAVE…IIEFVEILSN (193 aa)) is SLOG (STALD) domain, binds 3'cADPR. Residues glycine 289, serine 290, leucine 326, phenylalanine 357, arginine 371, lysine 388, glycine 399, and glutamate 403 each coordinate 3'cADPR.

Belongs to the soluble Thoeris ThsA family. As to quaternary structure, homotetramer formed by dimer of dimers; homooctamers are occasionally seen. Not seen to interact with ThsB. In the absence of the signal generated by ThsB, 63% monomer and 20% homotetramer; in the presence of the ThsB signal product 40% of the protein is dimeric. Homotetramer in solution; probably dimerizes via the N-terminal sirtuin-like domain.

It is found in the cytoplasm. It carries out the reaction NAD(+) + H2O = ADP-D-ribose + nicotinamide + H(+). Its activity is regulated as follows. Activated by a molecule generated by endogenous ThsB (AC J8G8J6) or ThsB' (AC J8CSK2); activation in vitro is 50-100x more sensitive to 3' cyclic ADP-D-ribose (3'cADPR) than 2'cADPR. 3'cADPR activates the NADase function of ThsA by binding to the SLOG domain, which changes its tetramer organization, allowing NAD to access the active site. Also activated by a signal molecule generated by B.dafuensis TIR1 (AC A0A5B8Z670) and TIR2 (AC A0A5B8Z260), and by BdTIR (AC I1GTC2), a plant protein involved in defense against bacterial infection. The signal produced by BdTIR is probably 2'cADPR, which activates this protein, the signal produced by endogenous ThsB' is probably 3'cADPR. Its function is as follows. NAD(+) hydrolyzing component (NADase) of the Thoeris antiviral defense system, composed of ThsA and ThsB. Activated by a signal molecule generated by endogenous ThsB (AC J8G8J6) or ThsB' (AC J8CSK2, probably 3'cADPR), by TIR1 and TIR2 from B.dafuensis or by BdTIR from B.distachyon (AC I1GTC2, probably 2'cADPR). Upon activation binds and hydrolyzes NAD(+), leading to cell death and inhibition of phage replication. Not seen to bind DNA. Activation is 50-100x more sensitive to 3' cyclic ADP-D-ribose (3'cADPR) than 2'cADPR. In another paper ThsA is not activated by any tested cADPR isomer, although it binds 3'cADPR; it was suggested the protein is already in a fully active state. Expression of ThsA and ThsB in B.subtilis (strain BEST7003) confers resistance to phages phi29, SBSphiC, SBSphiJ and SPO1. At multiplicity of infection (MOI) of 0.05 Thoeris-encoding cultures grow normally when infected with SPO1, at MOI 5 cultures collapse prematurely by 90 minutes post-infection, thus the phage are not able to complete a replication cycle. NAD(+) levels fall and ADP-D-ribose levels rise 60 minutes post-infection. Thoeris cultures eventually recover, but retain the same susceptibility to SPO1. The sequence is that of NAD(+) hydrolase ThsA from Bacillus cereus (strain MSX-D12).